A 123-amino-acid chain; its full sequence is Small ribosomal subunit protein uS12 (123 aa).

Asp-89 bears the 3-methylthioaspartic acid mark. The segment at 101 to 123 is disordered; sequence TLDTSGVSDRRQSRSKYGAKRPK. The segment covering 113 to 123 has biased composition (basic residues); the sequence is SRSKYGAKRPK.

It belongs to the universal ribosomal protein uS12 family. In terms of assembly, part of the 30S ribosomal subunit. Contacts proteins S8 and S17. May interact with IF1 in the 30S initiation complex.

In terms of biological role, with S4 and S5 plays an important role in translational accuracy. Its function is as follows. Interacts with and stabilizes bases of the 16S rRNA that are involved in tRNA selection in the A site and with the mRNA backbone. Located at the interface of the 30S and 50S subunits, it traverses the body of the 30S subunit contacting proteins on the other side and probably holding the rRNA structure together. The combined cluster of proteins S8, S12 and S17 appears to hold together the shoulder and platform of the 30S subunit. The sequence is that of Small ribosomal subunit protein uS12 from Solidesulfovibrio magneticus (strain ATCC 700980 / DSM 13731 / RS-1) (Desulfovibrio magneticus).